The sequence spans 401 residues: NADH-ubiquinone oxidoreductase 49 kDa subunit (401 aa).

The protein belongs to the complex I 49 kDa subunit family.

The protein localises to the mitochondrion. It carries out the reaction a ubiquinone + NADH + 5 H(+)(in) = a ubiquinol + NAD(+) + 4 H(+)(out). Functionally, core subunit of the mitochondrial membrane respiratory chain NADH dehydrogenase (Complex I) that is believed to belong to the minimal assembly required for catalysis. Complex I functions in the transfer of electrons from NADH to the respiratory chain. The immediate electron acceptor for the enzyme is believed to be ubiquinone. Component of the iron-sulfur (IP) fragment of the enzyme. The polypeptide is NADH-ubiquinone oxidoreductase 49 kDa subunit (NAD7) (Acanthamoeba castellanii (Amoeba)).